A 331-amino-acid polypeptide reads, in one-letter code: DSC E3 ubiquitin ligase complex subunit D (331 aa).

N-linked (GlcNAc...) asparagine glycosylation occurs at asparagine 26. 3 helical membrane passes run 63–83, 107–127, and 159–179; these read ILIY…ILFA, PFIG…NFFT, and LFLL…LIVE. Over residues 197–214 the composition is skewed to basic and acidic residues; that stretch reads VQDHDSEERGVHRTRPES. The tract at residues 197–225 is disordered; it reads VQDHDSEERGVHRTRPESRSSVVGAELDE.

Component of the DSC E3 ubiquitin ligase complex composed of dscA, dscB, dscC and dscD.

Its subcellular location is the endoplasmic reticulum membrane. The protein operates within protein modification; protein ubiquitination. Component of the DSC E3 ubiquitin ligase complex which is required for the srbA transcriptional activator proteolytic cleavage to release the soluble transcription factor from the membrane in low oxygen or sterol conditions. Required for growth during hypoxia and triazole drug susceptibility, as well as for virulence in a murine model of invasive pulmonary aspergillosis (IPA). The protein is DSC E3 ubiquitin ligase complex subunit D of Aspergillus fumigatus (strain CBS 144.89 / FGSC A1163 / CEA10) (Neosartorya fumigata).